Consider the following 485-residue polypeptide: UDP-N-acetylmuramate--L-alanine ligase (485 aa).

127–133 contributes to the ATP binding site; sequence GTHGKTT.

Belongs to the MurCDEF family.

Its subcellular location is the cytoplasm. It carries out the reaction UDP-N-acetyl-alpha-D-muramate + L-alanine + ATP = UDP-N-acetyl-alpha-D-muramoyl-L-alanine + ADP + phosphate + H(+). It participates in cell wall biogenesis; peptidoglycan biosynthesis. Cell wall formation. This chain is UDP-N-acetylmuramate--L-alanine ligase, found in Shewanella frigidimarina (strain NCIMB 400).